The chain runs to 305 residues: Oxygen-dependent coproporphyrinogen-III oxidase (305 aa).

Ser-93 serves as a coordination point for substrate. The a divalent metal cation site is built by His-97 and His-107. Residue His-107 is the Proton donor of the active site. Asn-109–Arg-111 provides a ligand contact to substrate. The a divalent metal cation site is built by His-146 and His-176. Positions Tyr-241–Gly-276 are important for dimerization. Gly-259–Arg-261 lines the substrate pocket.

The protein belongs to the aerobic coproporphyrinogen-III oxidase family. As to quaternary structure, homodimer. A divalent metal cation is required as a cofactor.

The protein localises to the cytoplasm. It catalyses the reaction coproporphyrinogen III + O2 + 2 H(+) = protoporphyrinogen IX + 2 CO2 + 2 H2O. The protein operates within porphyrin-containing compound metabolism; protoporphyrin-IX biosynthesis; protoporphyrinogen-IX from coproporphyrinogen-III (O2 route): step 1/1. Involved in the heme biosynthesis. Catalyzes the aerobic oxidative decarboxylation of propionate groups of rings A and B of coproporphyrinogen-III to yield the vinyl groups in protoporphyrinogen-IX. The sequence is that of Oxygen-dependent coproporphyrinogen-III oxidase from Pseudomonas paraeruginosa (strain DSM 24068 / PA7) (Pseudomonas aeruginosa (strain PA7)).